A 181-amino-acid polypeptide reads, in one-letter code: NAD(P)H-quinone oxidoreductase subunit I, chloroplastic (181 aa).

4Fe-4S ferredoxin-type domains follow at residues 55-84 (GRIH…VDWE) and 95-124 (KSYS…MTEE). Residues Cys-64, Cys-67, Cys-70, Cys-74, Cys-104, Cys-107, Cys-110, and Cys-114 each contribute to the [4Fe-4S] cluster site.

This sequence belongs to the complex I 23 kDa subunit family. As to quaternary structure, NDH is composed of at least 16 different subunits, 5 of which are encoded in the nucleus. [4Fe-4S] cluster is required as a cofactor.

The protein resides in the plastid. It localises to the chloroplast thylakoid membrane. The enzyme catalyses a plastoquinone + NADH + (n+1) H(+)(in) = a plastoquinol + NAD(+) + n H(+)(out). It catalyses the reaction a plastoquinone + NADPH + (n+1) H(+)(in) = a plastoquinol + NADP(+) + n H(+)(out). In terms of biological role, NDH shuttles electrons from NAD(P)H:plastoquinone, via FMN and iron-sulfur (Fe-S) centers, to quinones in the photosynthetic chain and possibly in a chloroplast respiratory chain. The immediate electron acceptor for the enzyme in this species is believed to be plastoquinone. Couples the redox reaction to proton translocation, and thus conserves the redox energy in a proton gradient. The sequence is that of NAD(P)H-quinone oxidoreductase subunit I, chloroplastic from Physcomitrium patens (Spreading-leaved earth moss).